Here is a 181-residue protein sequence, read N- to C-terminus: ATP synthase subunit delta (181 aa).

This sequence belongs to the ATPase delta chain family. F-type ATPases have 2 components, F(1) - the catalytic core - and F(0) - the membrane proton channel. F(1) has five subunits: alpha(3), beta(3), gamma(1), delta(1), epsilon(1). F(0) has three main subunits: a(1), b(2) and c(10-14). The alpha and beta chains form an alternating ring which encloses part of the gamma chain. F(1) is attached to F(0) by a central stalk formed by the gamma and epsilon chains, while a peripheral stalk is formed by the delta and b chains.

The protein localises to the cell membrane. In terms of biological role, f(1)F(0) ATP synthase produces ATP from ADP in the presence of a proton or sodium gradient. F-type ATPases consist of two structural domains, F(1) containing the extramembraneous catalytic core and F(0) containing the membrane proton channel, linked together by a central stalk and a peripheral stalk. During catalysis, ATP synthesis in the catalytic domain of F(1) is coupled via a rotary mechanism of the central stalk subunits to proton translocation. Its function is as follows. This protein is part of the stalk that links CF(0) to CF(1). It either transmits conformational changes from CF(0) to CF(1) or is implicated in proton conduction. The polypeptide is ATP synthase subunit delta (Mycoplasmoides gallisepticum (strain R(low / passage 15 / clone 2)) (Mycoplasma gallisepticum)).